The sequence spans 435 residues: ATP-dependent protease ATPase subunit HslU (435 aa).

ATP contacts are provided by residues isoleucine 18, 60-65 (GVGKTE), aspartate 248, glutamate 313, and arginine 385.

Belongs to the ClpX chaperone family. HslU subfamily. As to quaternary structure, a double ring-shaped homohexamer of HslV is capped on each side by a ring-shaped HslU homohexamer. The assembly of the HslU/HslV complex is dependent on binding of ATP.

It localises to the cytoplasm. In terms of biological role, ATPase subunit of a proteasome-like degradation complex; this subunit has chaperone activity. The binding of ATP and its subsequent hydrolysis by HslU are essential for unfolding of protein substrates subsequently hydrolyzed by HslV. HslU recognizes the N-terminal part of its protein substrates and unfolds these before they are guided to HslV for hydrolysis. The chain is ATP-dependent protease ATPase subunit HslU from Sinorhizobium medicae (strain WSM419) (Ensifer medicae).